The primary structure comprises 199 residues: Phosphatidylethanolamine N-methyltransferase (199 aa).

Over 2 to 12 (SWLLGYVDPTE) the chain is Lumenal. The helical intramembrane region spans 13-33 (PSFVAAVLTIVFNPLFWNVVA). The Lumenal segment spans residues 34-45 (RWEQRTRKLSRA). A helical transmembrane segment spans residues 46–66 (FGSPYLACYSLGSIILLLNIL). The Cytoplasmic segment spans residues 67-93 (RSHCFTQAMMSQPKMEGLDSHTIYFLG). The chain crosses the membrane as a helical span at residues 94–114 (LALLGWGLVFVLSSFYALGFT). Residue 98–100 (GWG) participates in S-adenosyl-L-methionine binding. Residues 115-157 (GTFLGDYFGILKESRVTTFPFSVLDNPMYWGSTANYLGWALMH) lie on the Lumenal side of the membrane. The helical transmembrane segment at 158 to 178 (ASPTGLLLTVLVALVYVVALL) threads the bilayer. The Cytoplasmic segment spans residues 179 to 199 (FEEPFTAEIYRRKATRLHKRS). An S-adenosyl-L-methionine-binding site is contributed by 180–181 (EE).

The protein belongs to the class VI-like SAM-binding methyltransferase superfamily. PEMT/PEM2 methyltransferase family. As to expression, expressed in liver (at protein level).

It localises to the endoplasmic reticulum membrane. Its subcellular location is the mitochondrion membrane. The catalysed reaction is a 1,2-diacyl-sn-glycero-3-phosphoethanolamine + S-adenosyl-L-methionine = a 1,2-diacyl-sn-glycero-3-phospho-N-methylethanolamine + S-adenosyl-L-homocysteine + H(+). The enzyme catalyses a 1,2-diacyl-sn-glycero-3-phospho-N-methylethanolamine + S-adenosyl-L-methionine = a 1,2-diacyl-sn-glycero-3-phospho-N,N-dimethylethanolamine + S-adenosyl-L-homocysteine + H(+). It carries out the reaction a 1,2-diacyl-sn-glycero-3-phospho-N,N-dimethylethanolamine + S-adenosyl-L-methionine = a 1,2-diacyl-sn-glycero-3-phosphocholine + S-adenosyl-L-homocysteine + H(+). It catalyses the reaction 1,2-di-(9Z-octadecenoyl)-sn-glycero-3-phosphoethanolamine + S-adenosyl-L-methionine = 1,2-di-(9Z-octadecenoyl)-sn-glycero-3-phospho-N-methylethanolamine + S-adenosyl-L-homocysteine + H(+). The catalysed reaction is 1,2-di-(9Z-octadecenoyl)-sn-glycero-3-phospho-N-methylethanolamine + S-adenosyl-L-methionine = 1,2-di-(9Z-octadecenoyl)-sn-glycero-3-phospho-N,N-dimethylethanolamine + S-adenosyl-L-homocysteine + H(+). The enzyme catalyses 1,2-di-(9Z-octadecenoyl)-sn-glycero-3-phospho-N,N-dimethylethanolamine + S-adenosyl-L-methionine = 1,2-di-(9Z-octadecenoyl)-sn-glycero-3-phosphocholine + S-adenosyl-L-homocysteine + H(+). It carries out the reaction 1,2-di-(9Z,12Z-octadecadienoyl)-sn-glycero-3-phosphoethanolamine + S-adenosyl-L-methionine = 1,2-di-(9Z,12Z-octadecadienoyl)-sn-glycero-3-phospho-N-methylethanolamine + S-adenosyl-L-homocysteine + H(+). It catalyses the reaction 1,2-di-(9Z,12Z-octadecadienoyl)-sn-glycero-3-phospho-N-methylethanolamine + S-adenosyl-L-methionine = 1,2-di-(9Z,12Z-octadecadienoyl)-sn-glycero-3-phospho-N,N-dimethylethanolamine + S-adenosyl-L-homocysteine + H(+). The catalysed reaction is 1,2-di-(9Z,12Z-octadecadienoyl)-sn-glycero-3-phospho-N,N-dimethylethanolamine + S-adenosyl-L-methionine = 1,2-di-(9Z,12Z-octadecadienoyl)-sn-glycero-3-phosphocholine + S-adenosyl-L-homocysteine + H(+). The enzyme catalyses 1,2-di-(9Z,12Z,15Z-octadecatrienoyl)-sn-glycero-3-phosphoethanolamine + S-adenosyl-L-methionine = 1,2-di-(9Z,12Z,15Z-octadecatrienoyl)-sn-glycero-3-phospho-N-methylethanolamine + S-adenosyl-L-homocysteine + H(+). It carries out the reaction 1,2-di-(9Z,12Z,15Z-octadecatrienoyl)-sn-glycero-3-phospho-N-methylethanolamine + S-adenosyl-L-methionine = 1,2-di-(9Z,12Z,15Z-octadecatrienoyl)-sn-glycero-3-phospho-N,N-dimethylethanolamine + S-adenosyl-L-homocysteine + H(+). It catalyses the reaction 1,2-di-(9Z,12Z,15Z-octadecatrienoyl)-sn-glycero-3-phospho-N,N-dimethylethanolamine + S-adenosyl-L-methionine = 1,2-di-(9Z,12Z,15Z-octadecatrienoyl)-sn-glycero-3-phosphocholine + S-adenosyl-L-homocysteine + H(+). The catalysed reaction is 1-hexadecanoyl-2-(4Z,7Z,10Z,13Z,16Z,19Z-docosahexaenoyl)-sn-glycero-3-phosphoethanolamine + S-adenosyl-L-methionine = 1-hexadecanoyl-2-(4Z,7Z,10Z,13Z,16Z,19Z-docosahexaenoyl)-sn-glycero-3-phospho-N-methylethanolamine + S-adenosyl-L-homocysteine + H(+). The enzyme catalyses 1-hexadecanoyl-2-(4Z,7Z,10Z,13Z,16Z,19Z-docosahexaenoyl)-sn-glycero-3-phospho-N-methylethanolamine + S-adenosyl-L-methionine = 1-hexadecanoyl-2-(4Z,7Z,10Z,13Z,16Z,19Z-docosahexaenoyl)-sn-glycero-3-phospho-N,N-dimethylethanolamine + S-adenosyl-L-homocysteine + H(+). It carries out the reaction 1-hexadecanoyl-2-(4Z,7Z,10Z,13Z,16Z,19Z-docosahexaenoyl)-sn-glycero-3-phospho-N,N-dimethylethanolamine + S-adenosyl-L-methionine = 1-hexadecanoyl-2-(4Z,7Z,10Z,13Z,16Z,19Z-docosahexaenoyl)-sn-glycero-3-phosphocholine + S-adenosyl-L-homocysteine + H(+). The protein operates within phospholipid metabolism; phosphatidylcholine biosynthesis. Catalyzes the three sequential steps of the methylation pathway for the biosynthesis of phosphatidylcholine, a critical and essential component for membrane structure. Uses S-adenosylmethionine (S-adenosyl-L-methionine, SAM or AdoMet) as the methyl group donor for the methylation of phosphatidylethanolamine (1,2-diacyl-sn-glycero-3-phosphoethanolamine, PE) to phosphatidylmonomethylethanolamine (1,2-diacyl-sn-glycero-3-phospho-N-methylethanolamine, PMME), PMME to phosphatidyldimethylethanolamine (1,2-diacyl-sn-glycero-3-phospho-N,N-dimethylethanolamine, PDME), and PDME to phosphatidylcholine (1,2-diacyl-sn-glycero-3-phosphocholine, PC), producing S-adenosyl-L-homocysteine in each step. In Rattus norvegicus (Rat), this protein is Phosphatidylethanolamine N-methyltransferase.